The following is a 66-amino-acid chain: U10-theraphotoxin-Cg1a 3 (66 aa).

A signal peptide spans 1 to 21 (MKTSVLFVIFGLALLFCLSFA). Residues 22–29 (DELEDTGR) constitute a propeptide that is removed on maturation. Intrachain disulfides connect Cys-31–Cys-46, Cys-38–Cys-51, and Cys-45–Cys-58.

This sequence belongs to the neurotoxin 10 (Hwtx-1) family. 29 (Jztx-13) subfamily. As to expression, expressed by the venom gland.

It localises to the secreted. Its function is as follows. Probable ion channel inhibitor. The polypeptide is U10-theraphotoxin-Cg1a 3 (Chilobrachys guangxiensis (Chinese earth tiger tarantula)).